We begin with the raw amino-acid sequence, 475 residues long: Gustatory and pheromone receptor 33a (475 aa).

Residues 1–34 (MIQIMNWFSMVIGLIPLNRQQSETNFILDYAMMC) are Cytoplasmic-facing. Residues 35–55 (IVPIFYVACYLLINLSHIIGL) traverse the membrane as a helical segment. Over 56 to 68 (CLLDSCNSVCKLS) the chain is Extracellular. A helical transmembrane segment spans residues 69 to 89 (SHLFMHLGAFLYLTITLLSLY). The Cytoplasmic portion of the chain corresponds to 90–128 (RRKEFFQQFDARLNDIDAVIQKCQRVAEMDKVKVTAVKH). Residues 129–149 (SVAYHFTWLFLFCVFTFALYY) traverse the membrane as a helical segment. Residues 150 to 158 (DVRSLYLTF) lie on the Extracellular side of the membrane. A helical membrane pass occupies residues 159–179 (GNLAFIPFMVSSFPYLAGSII). The Cytoplasmic segment spans residues 180–319 (QGEFIYHVSV…LALSVITNGE (140 aa)). Residues 243–281 (TGFGNENKFAGEMKRQEGQQKNDDDDLDTSNDEDEDDFD) are disordered. Basic and acidic residues predominate over residues 251–264 (FAGEMKRQEGQQKN). Acidic residues predominate over residues 265-281 (DDDDLDTSNDEDEDDFD). Residues 320–340 (FGPQCVPYMAACFVVSIFGIF) form a helical membrane-spanning segment. Over 341–357 (LETKVNFIVGGKSRLLD) the chain is Extracellular. Residues 358–378 (YMTYLYVIWSFTTMMVAYIVL) traverse the membrane as a helical segment. The Cytoplasmic portion of the chain corresponds to 379-441 (RLCCNANNHS…FNGVGLFALD (63 aa)). Residues 442-462 (YTFIFSTVSAATSYLIVLLQF) form a helical membrane-spanning segment. Over 463–475 (DMTAILRNEGLMS) the chain is Extracellular.

The protein belongs to the insect chemoreceptor superfamily. Gustatory receptor (GR) family. Gr66a subfamily. In terms of tissue distribution, expressed widely in gustatory receptor neurons (GRNs) that respond to aversive chemicals. In larvae, is expressed in neurons of the terminal external chemosensory organ, and the dorsal, ventral and posterior external chemosensory organs.

The protein localises to the cell membrane. Its function is as follows. Gustatory receptor which mediates acceptance or avoidance behavior, depending on its substrates. Required for sensing all nonvolatile repulsive chemicals, including tastants, pheromones, and especially N,N-Diethyl-meta-toluamide (DEET), the most widely used insect repellent worldwide. Also functions as a pheromone receptor for a male inhibitory pheromone leading to male-male courtship suppression. The protein is Gustatory and pheromone receptor 33a (Gr33a) of Drosophila melanogaster (Fruit fly).